The following is a 36-amino-acid chain: Adenylate kinase (36 aa).

Residue 10–15 (GAGKGT) coordinates ATP. The interval 30–36 (ATGDLFR) is NMP. 2 residues coordinate AMP: T31 and R36.

This sequence belongs to the adenylate kinase family. In terms of assembly, monomer.

Its subcellular location is the cytoplasm. The enzyme catalyses AMP + ATP = 2 ADP. It functions in the pathway purine metabolism; AMP biosynthesis via salvage pathway; AMP from ADP: step 1/1. Functionally, catalyzes the reversible transfer of the terminal phosphate group between ATP and AMP. Plays an important role in cellular energy homeostasis and in adenine nucleotide metabolism. The protein is Adenylate kinase (adk) of Streptomyces griseus.